Here is a 302-residue protein sequence, read N- to C-terminus: Zygote arrest protein 2.S (302 aa).

Disordered regions lie at residues 15 to 46 (YGGNFGQNPHRPQAFPKNKQAAWKSNKSSEPP), 88 to 117 (VDTGVQCSLGPRTLRRPPPPPSSPVKPTDC), and 138 to 195 (LPQG…EPNK). A compositionally biased stretch (basic and acidic residues) spans 159-178 (LKDRGPSPEEKEPETKEALE). The 3CxxC-type zinc finger occupies 203–288 (QKYGYFHCKD…QELCGRCKNK (86 aa)).

The protein belongs to the ZAR1 family. In terms of tissue distribution, oocyte-specific.

It localises to the cytoplasm. Its subcellular location is the cytoplasmic ribonucleoprotein granule. In terms of biological role, mRNA-binding protein required for maternal mRNA storage, translation and degradation during oocyte maturation. Probably promotes formation of some phase-separated membraneless compartment that stores maternal mRNAs in oocytes: acts by undergoing liquid-liquid phase separation upon binding to maternal mRNAs. Binds to the 3'-UTR of maternal mRNAs, inhibiting their translation. The protein is Zygote arrest protein 2.S of Xenopus laevis (African clawed frog).